A 1203-amino-acid chain; its full sequence is Transmembrane channel-like protein 2 (1203 aa).

Disordered regions lie at residues 1-39 (MPKS…IDSR) and 64-90 (PHTR…EASK). A compositionally biased stretch (acidic residues) spans 73-86 (FDDDDDEFDEEDDK). Residues 191 to 213 (VLGVNITITFIMCMFVVIPEWLA) traverse the membrane as a helical segment. N-linked (GlcNAc...) asparagine glycosylation occurs at asparagine 225. The next 6 helical transmembrane spans lie at 276–298 (YRVP…FIIL), 369–391 (FVAR…WAIM), 406–428 (ATAI…LGKI), 441–463 (LGRV…MLQL), 665–687 (MIWL…LIIL), and 714–736 (FFFA…VIAS). A glycan (N-linked (GlcNAc...) asparagine) is linked at asparagine 748. The chain crosses the membrane as a helical span at residues 780 to 802 (IIIPVLVLLSLVIYFLIAMVTGL). Disordered regions lie at residues 826–908 (ELAG…SLPP), 927–1039 (KYGR…IEKQ), 1059–1087 (ATVE…HEPL), and 1112–1203 (NDET…SDND). The span at 865-874 (NRSTAKSVSG) shows a compositional bias: polar residues. Residues 898 to 908 (DSESTTSSLPP) show a composition bias toward low complexity. Basic and acidic residues predominate over residues 927–945 (KYGRHDDIEMEEGGGRLRE). Composition is skewed to low complexity over residues 973 to 997 (QSFD…PSNS) and 1022 to 1035 (SASS…PSSS). Residues 1061–1076 (VENSSQDPTRPPSTDD) show a composition bias toward polar residues. Composition is skewed to basic and acidic residues over residues 1133 to 1147 (SPRE…KDQQ) and 1172 to 1203 (PPSE…SDND).

The protein belongs to the TMC family.

The protein resides in the membrane. In terms of biological role, probable ion channel. The sequence is that of Transmembrane channel-like protein 2 (tmc-2) from Caenorhabditis elegans.